The following is a 489-amino-acid chain: Betaine aldehyde dehydrogenase (489 aa).

Positions 26 and 93 each coordinate K(+). Residue 150 to 152 (GAW) coordinates NAD(+). Lys162 acts as the Charge relay system in catalysis. Position 176–179 (176–179 (KPSE)) interacts with NAD(+). Residue Val180 participates in K(+) binding. Residue 229–232 (GVET) participates in NAD(+) binding. K(+) is bound at residue Leu245. The Proton acceptor role is filled by Glu251. The NAD(+) site is built by Gly253, Cys285, and Glu386. Residue Cys285 is the Nucleophile of the active site. The residue at position 285 (Cys285) is a Cysteine sulfenic acid (-SOH). Residues Lys456 and Gly459 each contribute to the K(+) site. Residue Glu463 is the Charge relay system of the active site.

It belongs to the aldehyde dehydrogenase family. As to quaternary structure, dimer of dimers. It depends on K(+) as a cofactor.

It carries out the reaction betaine aldehyde + NAD(+) + H2O = glycine betaine + NADH + 2 H(+). It functions in the pathway amine and polyamine biosynthesis; betaine biosynthesis via choline pathway; betaine from betaine aldehyde: step 1/1. In terms of biological role, involved in the biosynthesis of the osmoprotectant glycine betaine. Catalyzes the irreversible oxidation of betaine aldehyde to the corresponding acid. This is Betaine aldehyde dehydrogenase from Burkholderia ambifaria (strain ATCC BAA-244 / DSM 16087 / CCUG 44356 / LMG 19182 / AMMD) (Burkholderia cepacia (strain AMMD)).